Consider the following 447-residue polypeptide: Nuclear envelope integral membrane protein 2 (447 aa).

A signal peptide spans methionine 1–alanine 28. The next 5 helical transmembrane spans lie at glutamate 144–alanine 164, phenylalanine 173–alanine 193, serine 202–phenylalanine 222, isoleucine 235–histidine 255, and alanine 275–valine 295. The segment at threonine 410–isoleucine 438 is disordered.

This sequence belongs to the NEMP family.

It is found in the nucleus inner membrane. The polypeptide is Nuclear envelope integral membrane protein 2 (NEMP2) (Gallus gallus (Chicken)).